Reading from the N-terminus, the 160-residue chain is Nucleotide-binding protein VC_1508 (160 aa).

It belongs to the YajQ family.

Its function is as follows. Nucleotide-binding protein. This is Nucleotide-binding protein VC_1508 from Vibrio cholerae serotype O1 (strain ATCC 39315 / El Tor Inaba N16961).